We begin with the raw amino-acid sequence, 200 residues long: MFRKGKKRHSSSSSQSSEISTKSKSVDSSLGGLSRSSTVASLDTDSTKSSGQSNSNLDTCAEFRIKYVGAIEKLAVSEGKSLEGPLDLINYIDVAQQDGKLPFVPLEEEFILGVSKYGIKVSTTDQHGVLHRHALYLIIRMVCYDDGLGAGKSLLALKTTDASNEEYSLWVYQCNSLEQAQAICKVLSTAFDSVLTSDKS.

Residues 1–10 (MFRKGKKRHS) are compositionally biased toward basic residues. The segment at 1 to 55 (MFRKGKKRHSSSSSQSSEISTKSKSVDSSLGGLSRSSTVASLDTDSTKSSGQSNS) is disordered. The short motif at 6-7 (KK) is the Nuclear localization signal element. Residues 11-29 (SSSSQSSEISTKSKSVDSS) are compositionally biased toward low complexity. Residues 34–55 (SRSSTVASLDTDSTKSSGQSNS) are compositionally biased toward polar residues. Threonine 38 carries the phosphothreonine; by CaMK2 modification. Residue serine 41 is modified to Phosphoserine. One can recognise a PID domain in the interval 58–200 (DTCAEFRIKY…FDSVLTSDKS (143 aa)). Residues 136–139 (YLII) form an interaction with KRIT1 region. The interval 139–141 (IRM) is interaction with ITGB1.

Found in a complex, at least composed of ITGB1BP1, KRIT1 and RAP1A. Interacts (via C-terminal region) with ITGB1 (via C-terminal cytoplasmic tail); the interaction prevents talin TLN1 binding to ITGB1 and KRIT1 and ITGB1 compete for the same binding site. Interacts with KRIT1 (via N-terminal NPXY motif); the interaction induces the opening conformation of KRIT1 and KRIT1 and ITGB1 compete for the same binding site. Isoform 2 does not interact with ITGB1. Interacts with CDC42 (GTP- or GDP-bound form); the interaction is increased with the CDC42-membrane bound forms and prevents both CDC42 activation and cell spreading. Interacts (via C-terminal domain region) with NME2. Interacts with FERMT2 and RAC1. Interacts (via N-terminus and PTB domain) with ROCK1. Phosphorylation at Thr-38 seems to enhance integrin alpha5beta1-mediated cell adhesion. The degree of phosphorylation is regulated by integrin-dependent cell-matrix interaction. Expressed in the brain.

It localises to the nucleus. The protein localises to the cytoplasm. The protein resides in the cytoskeleton. Its subcellular location is the cell membrane. It is found in the cell projection. It localises to the lamellipodium. The protein localises to the ruffle. Its function is as follows. Key regulator of the integrin-mediated cell-matrix interaction signaling by binding to the ITGB1 cytoplasmic tail and preventing the activation of integrin alpha-5/beta-1 (heterodimer of ITGA5 and ITGB1) by talin or FERMT1. Plays a role in cell proliferation, differentiation, spreading, adhesion and migration in the context of mineralization and bone development and angiogenesis. Stimulates cellular proliferation in a fibronectin-dependent manner. Involved in the regulation of beta-1 integrin-containing focal adhesion (FA) site dynamics by controlling its assembly rate during cell adhesion; inhibits beta-1 integrin clustering within FA by directly competing with talin TLN1, and hence stimulates osteoblast spreading and migration in a fibronectin- and/or collagen-dependent manner. Acts as a guanine nucleotide dissociation inhibitor (GDI) by regulating Rho family GTPases during integrin-mediated cell matrix adhesion; reduces the level of active GTP-bound form of both CDC42 and RAC1 GTPases upon cell adhesion to fibronectin. Stimulates the release of active CDC42 from the membranes to maintain it in an inactive cytoplasmic pool. Participates in the translocation of the Rho-associated protein kinase ROCK1 to membrane ruffles at cell leading edges of the cell membrane, leading to an increase of myoblast cell migration on laminin. Plays a role in bone mineralization at a late stage of osteoblast differentiation; modulates the dynamic formation of focal adhesions into fibrillar adhesions, which are adhesive structures responsible for fibronectin deposition and fibrillogenesis. Plays a role in blood vessel development; acts as a negative regulator of angiogenesis by attenuating endothelial cell proliferation and migration, lumen formation and sprouting angiogenesis by promoting AKT phosphorylation and inhibiting ERK1/2 phosphorylation through activation of the Notch signaling pathway. Promotes transcriptional activity of the MYC promoter. In Mus musculus (Mouse), this protein is Integrin beta-1-binding protein 1 (Itgb1bp1).